We begin with the raw amino-acid sequence, 505 residues long: ATP synthase subunit alpha (505 aa).

A disordered region spans residues 118 to 138 (VDGLGPINTTNTRPIESPAPG). Residue 172–179 (GDRQTGKT) coordinates ATP.

It belongs to the ATPase alpha/beta chains family. F-type ATPases have 2 components, CF(1) - the catalytic core - and CF(0) - the membrane proton channel. CF(1) has five subunits: alpha(3), beta(3), gamma(1), delta(1), epsilon(1). CF(0) has three main subunits: a(1), b(2) and c(9-12). The alpha and beta chains form an alternating ring which encloses part of the gamma chain. CF(1) is attached to CF(0) by a central stalk formed by the gamma and epsilon chains, while a peripheral stalk is formed by the delta and b chains.

The protein localises to the cell membrane. It carries out the reaction ATP + H2O + 4 H(+)(in) = ADP + phosphate + 5 H(+)(out). Produces ATP from ADP in the presence of a proton gradient across the membrane. The alpha chain is a regulatory subunit. The chain is ATP synthase subunit alpha from Bacillus cereus (strain ATCC 14579 / DSM 31 / CCUG 7414 / JCM 2152 / NBRC 15305 / NCIMB 9373 / NCTC 2599 / NRRL B-3711).